Consider the following 348-residue polypeptide: Dihydroorotase (348 aa).

Zn(2+) contacts are provided by H17 and H19. Substrate-binding positions include 19-21 (HLR) and N45. Zn(2+)-binding residues include K103, H140, and H178. K103 bears the N6-carboxylysine mark. H140 contacts substrate. L223 contacts substrate. Residue D251 participates in Zn(2+) binding. D251 is a catalytic residue. Substrate is bound by residues H255 and A267.

Belongs to the metallo-dependent hydrolases superfamily. DHOase family. Class II DHOase subfamily. As to quaternary structure, homodimer. Zn(2+) serves as cofactor.

It carries out the reaction (S)-dihydroorotate + H2O = N-carbamoyl-L-aspartate + H(+). It functions in the pathway pyrimidine metabolism; UMP biosynthesis via de novo pathway; (S)-dihydroorotate from bicarbonate: step 3/3. In terms of biological role, catalyzes the reversible cyclization of carbamoyl aspartate to dihydroorotate. The protein is Dihydroorotase of Salmonella typhimurium (strain LT2 / SGSC1412 / ATCC 700720).